An 84-amino-acid chain; its full sequence is Small ribosomal subunit protein uS17 (84 aa).

The protein belongs to the universal ribosomal protein uS17 family. In terms of assembly, part of the 30S ribosomal subunit.

Functionally, one of the primary rRNA binding proteins, it binds specifically to the 5'-end of 16S ribosomal RNA. This chain is Small ribosomal subunit protein uS17, found in Photorhabdus laumondii subsp. laumondii (strain DSM 15139 / CIP 105565 / TT01) (Photorhabdus luminescens subsp. laumondii).